A 242-amino-acid chain; its full sequence is ATP synthase subunit a (242 aa).

The next 7 helical transmembrane spans lie at 23–43, 62–82, 84–104, 113–133, 143–163, 176–196, and 201–221; these read ISFT…AVLL, VELI…VGGL, YIPF…IGIL, HVSV…VLGF, IFLP…IKLF, LAAN…FVLK, and LAPL…FVAI.

Belongs to the ATPase A chain family. F-type ATPases have 2 components, CF(1) - the catalytic core - and CF(0) - the membrane proton channel. CF(1) has five subunits: alpha(3), beta(3), gamma(1), delta(1), epsilon(1). CF(0) has three main subunits: a(1), b(2) and c(9-12). The alpha and beta chains form an alternating ring which encloses part of the gamma chain. CF(1) is attached to CF(0) by a central stalk formed by the gamma and epsilon chains, while a peripheral stalk is formed by the delta and b chains.

It localises to the cell inner membrane. In terms of biological role, key component of the proton channel; it plays a direct role in the translocation of protons across the membrane. The polypeptide is ATP synthase subunit a (Anaplasma phagocytophilum (strain HZ)).